Consider the following 124-residue polypeptide: Small ribosomal subunit protein uS12 (124 aa).

Asp-89 is modified (3-methylthioaspartic acid).

Belongs to the universal ribosomal protein uS12 family. Part of the 30S ribosomal subunit. Contacts proteins S8 and S17. May interact with IF1 in the 30S initiation complex.

In terms of biological role, with S4 and S5 plays an important role in translational accuracy. Interacts with and stabilizes bases of the 16S rRNA that are involved in tRNA selection in the A site and with the mRNA backbone. Located at the interface of the 30S and 50S subunits, it traverses the body of the 30S subunit contacting proteins on the other side and probably holding the rRNA structure together. The combined cluster of proteins S8, S12 and S17 appears to hold together the shoulder and platform of the 30S subunit. This chain is Small ribosomal subunit protein uS12, found in Baumannia cicadellinicola subsp. Homalodisca coagulata.